A 366-amino-acid polypeptide reads, in one-letter code: MMQRVIIHVDMDYFYAAIEEREKPELLGKAVVVCMLSGRSELSGSVSTCNYIAREFGIRSGMPCSRAKKLNPEAVFLPVRKEFYTSVSDRIMEILRSYADPGENGDSFEQISVDEAFLEITYRAGGDFNLAFELGMQIKKEIKEKENLTCSIGIGPNKLIAKMASSAKKPDGITVVSPENQEAFLWPLKVSKLWGIGDVTAKKLQEMDIVTVKDLAEHDVIELISTFGKSRGTWLKQAASGIDDSPLKEREGSEQIGRIATLPEDTLDQELILSLLEKLAGDVIEKLDSRELSFRVVTVTVINSNFRTYTKSRTLNHPVSSKETLLEAAREILSEFLSESKTEFRRVGVRVGGLQKKKGQTSLFDY.

Residues 6-197 (IIHVDMDYFY…LKVSKLWGIG (192 aa)) enclose the UmuC domain. Mg(2+) is bound by residues aspartate 10 and aspartate 114. Glutamate 115 is an active-site residue.

This sequence belongs to the DNA polymerase type-Y family. Monomer. It depends on Mg(2+) as a cofactor.

Its subcellular location is the cytoplasm. The enzyme catalyses DNA(n) + a 2'-deoxyribonucleoside 5'-triphosphate = DNA(n+1) + diphosphate. Functionally, poorly processive, error-prone DNA polymerase involved in untargeted mutagenesis. Copies undamaged DNA at stalled replication forks, which arise in vivo from mismatched or misaligned primer ends. These misaligned primers can be extended by PolIV. Exhibits no 3'-5' exonuclease (proofreading) activity. May be involved in translesional synthesis. This Methanosarcina acetivorans (strain ATCC 35395 / DSM 2834 / JCM 12185 / C2A) protein is DNA polymerase IV.